The sequence spans 36 residues: IGGFECNEHEHRSLVYLYNSAGFFCAGTLLNHEWVV.

A Peptidase S1 domain is found at 1 to 36; it reads IGGFECNEHEHRSLVYLYNSAGFFCAGTLLNHEWVV.

It belongs to the peptidase S1 family. Snake venom subfamily. In terms of assembly, monomer. In terms of tissue distribution, expressed by the venom gland.

It localises to the secreted. Functionally, thrombin-like snake venom serine protease. Shows strong hydrolytic activity towards Boc-Asp(oBzl)-Pro-Arg-MCA, a synthetic substrate for thrombin. The chain is Thrombin-like enzyme TLP from Naja naja (Indian cobra).